A 160-amino-acid polypeptide reads, in one-letter code: Small ribosomal subunit protein bS6 (160 aa).

This sequence belongs to the bacterial ribosomal protein bS6 family.

Binds together with bS18 to 16S ribosomal RNA. The protein is Small ribosomal subunit protein bS6 of Ureaplasma parvum serovar 3 (strain ATCC 27815 / 27 / NCTC 11736).